The chain runs to 547 residues: Chaperonin GroEL (547 aa).

ATP contacts are provided by residues 30–33, K51, 87–91, G415, 480–482, and D496; these read TLGP, DGTTT, and NAA. Residues 525–547 are disordered; that stretch reads KPDDKPAMPPMGGGMGGMGGMDF. Gly residues predominate over residues 535 to 547; it reads MGGGMGGMGGMDF.

Belongs to the chaperonin (HSP60) family. As to quaternary structure, forms a cylinder of 14 subunits composed of two heptameric rings stacked back-to-back. Interacts with the co-chaperonin GroES.

It is found in the cytoplasm. The enzyme catalyses ATP + H2O + a folded polypeptide = ADP + phosphate + an unfolded polypeptide.. Functionally, together with its co-chaperonin GroES, plays an essential role in assisting protein folding. The GroEL-GroES system forms a nano-cage that allows encapsulation of the non-native substrate proteins and provides a physical environment optimized to promote and accelerate protein folding. The sequence is that of Chaperonin GroEL from Novosphingobium aromaticivorans (strain ATCC 700278 / DSM 12444 / CCUG 56034 / CIP 105152 / NBRC 16084 / F199).